A 307-amino-acid chain; its full sequence is Stage III sporulation protein AA (307 aa).

Residue 143–150 (GPPQTGKT) coordinates ATP.

The chain is Stage III sporulation protein AA (spoIIIAA) from Bacillus subtilis (strain 168).